The primary structure comprises 538 residues: Bifunctional purine biosynthesis protein PurH (538 aa).

The 153-residue stretch at 6 to 158 (KHIPAPDLHR…KNHAYVATVV (153 aa)) folds into the MGS-like domain.

Belongs to the PurH family.

The enzyme catalyses (6R)-10-formyltetrahydrofolate + 5-amino-1-(5-phospho-beta-D-ribosyl)imidazole-4-carboxamide = 5-formamido-1-(5-phospho-D-ribosyl)imidazole-4-carboxamide + (6S)-5,6,7,8-tetrahydrofolate. It catalyses the reaction IMP + H2O = 5-formamido-1-(5-phospho-D-ribosyl)imidazole-4-carboxamide. It participates in purine metabolism; IMP biosynthesis via de novo pathway; 5-formamido-1-(5-phospho-D-ribosyl)imidazole-4-carboxamide from 5-amino-1-(5-phospho-D-ribosyl)imidazole-4-carboxamide (10-formyl THF route): step 1/1. It functions in the pathway purine metabolism; IMP biosynthesis via de novo pathway; IMP from 5-formamido-1-(5-phospho-D-ribosyl)imidazole-4-carboxamide: step 1/1. The protein is Bifunctional purine biosynthesis protein PurH of Brucella melitensis biotype 2 (strain ATCC 23457).